The primary structure comprises 476 residues: Adenosylhomocysteinase (476 aa).

3 residues coordinate substrate: Thr-65, Asp-140, and Glu-201. 202 to 204 (TTT) contacts NAD(+). Lys-231 and Asp-235 together coordinate substrate. NAD(+) contacts are provided by residues Asn-236, 265 to 270 (GYGDVG), Glu-288, Asn-323, 344 to 346 (IGH), and Asn-392.

The protein belongs to the adenosylhomocysteinase family. NAD(+) serves as cofactor.

Its subcellular location is the cytoplasm. It catalyses the reaction S-adenosyl-L-homocysteine + H2O = L-homocysteine + adenosine. It participates in amino-acid biosynthesis; L-homocysteine biosynthesis; L-homocysteine from S-adenosyl-L-homocysteine: step 1/1. May play a key role in the regulation of the intracellular concentration of adenosylhomocysteine. This Bacteroides thetaiotaomicron (strain ATCC 29148 / DSM 2079 / JCM 5827 / CCUG 10774 / NCTC 10582 / VPI-5482 / E50) protein is Adenosylhomocysteinase.